We begin with the raw amino-acid sequence, 104 residues long: Acetylcholine receptor subunit alpha (104 aa).

Topologically, residues 1–104 (NPPAIFKSYC…YFIVNVIIPC (104 aa)) are extracellular. Intrachain disulfides connect cysteine 10/cysteine 24 and cysteine 74/cysteine 75. The N-linked (GlcNAc...) asparagine glycan is linked to asparagine 23.

It belongs to the ligand-gated ion channel (TC 1.A.9) family. Acetylcholine receptor (TC 1.A.9.1) subfamily. Alpha-1/CHRNA1 sub-subfamily. One of the alpha chains that assemble within the acetylcholine receptor, a pentamer of two alpha chains, a beta, a delta, and a gamma or epsilon chains.

The protein localises to the postsynaptic cell membrane. The protein resides in the cell membrane. It catalyses the reaction K(+)(in) = K(+)(out). The enzyme catalyses Na(+)(in) = Na(+)(out). In terms of biological role, upon acetylcholine binding, the AChR responds by an extensive change in conformation that affects all subunits and leads to opening of an ion-conducting channel across the plasma membrane. The polypeptide is Acetylcholine receptor subunit alpha (CHRNA1) (Naja naja (Indian cobra)).